We begin with the raw amino-acid sequence, 498 residues long: ATP synthase subunit beta, chloroplastic (498 aa).

172–179 serves as a coordination point for ATP; sequence GGAGVGKT.

This sequence belongs to the ATPase alpha/beta chains family. F-type ATPases have 2 components, CF(1) - the catalytic core - and CF(0) - the membrane proton channel. CF(1) has five subunits: alpha(3), beta(3), gamma(1), delta(1), epsilon(1). CF(0) has four main subunits: a(1), b(1), b'(1) and c(9-12).

Its subcellular location is the plastid. The protein localises to the chloroplast thylakoid membrane. It catalyses the reaction ATP + H2O + 4 H(+)(in) = ADP + phosphate + 5 H(+)(out). Functionally, produces ATP from ADP in the presence of a proton gradient across the membrane. The catalytic sites are hosted primarily by the beta subunits. This Lactuca sativa (Garden lettuce) protein is ATP synthase subunit beta, chloroplastic.